Reading from the N-terminus, the 405-residue chain is Tryptophan synthase beta chain (405 aa).

Position 98 is an N6-(pyridoxal phosphate)lysine (Lys-98).

It belongs to the TrpB family. Tetramer of two alpha and two beta chains. Pyridoxal 5'-phosphate is required as a cofactor.

It carries out the reaction (1S,2R)-1-C-(indol-3-yl)glycerol 3-phosphate + L-serine = D-glyceraldehyde 3-phosphate + L-tryptophan + H2O. Its pathway is amino-acid biosynthesis; L-tryptophan biosynthesis; L-tryptophan from chorismate: step 5/5. Functionally, the beta subunit is responsible for the synthesis of L-tryptophan from indole and L-serine. The polypeptide is Tryptophan synthase beta chain (Afipia carboxidovorans (strain ATCC 49405 / DSM 1227 / KCTC 32145 / OM5) (Oligotropha carboxidovorans)).